Here is a 472-residue protein sequence, read N- to C-terminus: Calcitonin gene-related peptide type 1 receptor (472 aa).

Positions 1–28 (MGLLLRSALFKYIIIVLIMLNLRGYVLA) are cleaved as a signal peptide. At 29 to 149 (EQEQGSQIPL…FTHEKVKTAL (121 aa)) the chain is on the extracellular side. Disulfide bonds link Cys-58–Cys-84, Cys-75–Cys-115, and Cys-98–Cys-137. N-linked (GlcNAc...) asparagine glycans are attached at residues Asn-76, Asn-128, and Asn-133. A helical membrane pass occupies residues 150–174 (NLYYLTIIGHGLSIASLLISLGIFF). Topologically, residues 175-185 (YFKNLSCQRIT) are cytoplasmic. A helical transmembrane segment spans residues 186–208 (LHKNLFFSFVCNSIITIISLSAV). The Extracellular portion of the chain corresponds to 209-219 (ANNQALVATNP). Residues 220 to 248 (VSCKISQFIHLYLMGCNYFWMLCEGIYLH) form a helical membrane-spanning segment. Topologically, residues 249–262 (TLIVVAVFAEKQHL) are cytoplasmic. Residues 263–283 (MWYYLLGWGFPLIPACIHAVA) traverse the membrane as a helical segment. The Extracellular segment spans residues 284–299 (RSLYYNDNCWISSETH). A helical membrane pass occupies residues 300 to 324 (LLYIIHGPICAALLVNLFFLLNIVR). Over 325–339 (VLITKLKVTHQAESN) the chain is Cytoplasmic. The chain crosses the membrane as a helical span at residues 340–361 (LYMKAVRATLILVPLLGIEFVL). The Extracellular segment spans residues 362–376 (FPWKPEGRIAEEIYD). The helical transmembrane segment at 377–397 (YVMHILMHYQGLLVATIFCFF) threads the bilayer. The Cytoplasmic segment spans residues 398–472 (NGEVQAVLKR…VFFKTEKQYM (75 aa)).

Belongs to the G-protein coupled receptor 2 family.

Its subcellular location is the cell membrane. Its function is as follows. May function as G protein-coupled receptor for calcitonin-gene-related peptides and adrenomedullin. Specificity may be modulated by accessory proteins. May activate cAMP-dependent pathway. This chain is Calcitonin gene-related peptide type 1 receptor (calcrl), found in Xenopus tropicalis (Western clawed frog).